Consider the following 420-residue polypeptide: Histidine--tRNA ligase (420 aa).

The protein belongs to the class-II aminoacyl-tRNA synthetase family. As to quaternary structure, homodimer.

It localises to the cytoplasm. The catalysed reaction is tRNA(His) + L-histidine + ATP = L-histidyl-tRNA(His) + AMP + diphosphate + H(+). This Saccharopolyspora erythraea (strain ATCC 11635 / DSM 40517 / JCM 4748 / NBRC 13426 / NCIMB 8594 / NRRL 2338) protein is Histidine--tRNA ligase.